Consider the following 184-residue polypeptide: Large ribosomal subunit protein uL5 (184 aa).

Belongs to the universal ribosomal protein uL5 family. As to quaternary structure, part of the 50S ribosomal subunit; part of the 5S rRNA/L5/L18/L25 subcomplex. Contacts the 5S rRNA and the P site tRNA. Forms a bridge to the 30S subunit in the 70S ribosome.

This is one of the proteins that bind and probably mediate the attachment of the 5S RNA into the large ribosomal subunit, where it forms part of the central protuberance. In the 70S ribosome it contacts protein S13 of the 30S subunit (bridge B1b), connecting the 2 subunits; this bridge is implicated in subunit movement. Contacts the P site tRNA; the 5S rRNA and some of its associated proteins might help stabilize positioning of ribosome-bound tRNAs. The sequence is that of Large ribosomal subunit protein uL5 from Ureaplasma parvum serovar 3 (strain ATCC 27815 / 27 / NCTC 11736).